The sequence spans 414 residues: Serine/threonine transporter SstT (414 aa).

8 consecutive transmembrane segments (helical) span residues 22 to 42, 54 to 74, 89 to 109, 148 to 168, 189 to 209, 223 to 243, 305 to 325, and 337 to 357; these read GLVL…TIGF, IFVK…VMAA, IIVL…IAGF, AIFK…GLAL, IVHV…AETL, LLAV…PILV, MAGA…TLGL, and IVAA…LLLI.

The protein belongs to the dicarboxylate/amino acid:cation symporter (DAACS) (TC 2.A.23) family.

Its subcellular location is the cell inner membrane. It carries out the reaction L-serine(in) + Na(+)(in) = L-serine(out) + Na(+)(out). It catalyses the reaction L-threonine(in) + Na(+)(in) = L-threonine(out) + Na(+)(out). Involved in the import of serine and threonine into the cell, with the concomitant import of sodium (symport system). This is Serine/threonine transporter SstT from Haemophilus influenzae (strain 86-028NP).